The following is a 448-amino-acid chain: Tryptophan dimethylallyltransferase 1 (448 aa).

L-tryptophan contacts are provided by residues 80–81 (IL) and Glu89. 3 residues coordinate substrate: Arg100, Lys186, and Tyr188. The L-tryptophan site is built by Tyr190 and Arg249. The substrate site is built by Arg262, Lys264, Tyr266, Gln348, Tyr350, Tyr414, and Tyr418.

The protein belongs to the tryptophan dimethylallyltransferase family. As to quaternary structure, homodimer.

It catalyses the reaction L-tryptophan + dimethylallyl diphosphate = 4-(3-methylbut-2-enyl)-L-tryptophan + diphosphate. The protein operates within alkaloid biosynthesis; ergot alkaloid biosynthesis. In terms of biological role, tryptophan dimethylallyltransferase; part of the gene cluster that mediates the biosynthesis of fungal ergot alkaloid. DmaW catalyzes the first step of ergot alkaloid biosynthesis by condensing dimethylallyl diphosphate (DMAP) and tryptophan to form 4-dimethylallyl-L-tryptophan. The second step is catalyzed by the methyltransferase easF that methylates 4-dimethylallyl-L-tryptophan in the presence of S-adenosyl-L-methionine, resulting in the formation of 4-dimethylallyl-L-abrine. The catalase easC and the FAD-dependent oxidoreductase easE then transform 4-dimethylallyl-L-abrine to chanoclavine-I which is further oxidized by easD in the presence of NAD(+), resulting in the formation of chanoclavine-I aldehyde. Agroclavine dehydrogenase easG then mediates the conversion of chanoclavine-I aldehyde to agroclavine via a non-enzymatic adduct reaction: the substrate is an iminium intermediate that is formed spontaneously from chanoclavine-I aldehyde in the presence of glutathione. The presence of easA is not required to complete this reaction. Further conversion of agroclavine to paspalic acid is a two-step process involving oxidation of agroclavine to elymoclavine and of elymoclavine to paspalic acid, the second step being performed by the elymoclavine oxidase cloA. Paspalic acid is then further converted to D-lysergic acid. Ergopeptines are assembled from D-lysergic acid and three different amino acids by the D-lysergyl-peptide-synthetases composed each of a monomudular and a trimodular nonribosomal peptide synthetase subunit. LpsB and lpsC encode the monomodular subunits responsible for D-lysergic acid activation and incorporation into the ergopeptine backbone. LpsA1 and A2 subunits encode the trimodular nonribosomal peptide synthetase assembling the tripeptide portion of ergopeptines. LpsA1 is responsible for formation of the major ergopeptine, ergotamine, and lpsA2 for alpha-ergocryptine, the minor ergopeptine of the total alkaloid mixture elaborated by C.purpurea. D-lysergyl-tripeptides are assembled by the nonribosomal peptide synthetases and released as N-(D-lysergyl-aminoacyl)-lactams. Cyclolization of the D-lysergyl-tripeptides is performed by the Fe(2+)/2-ketoglutarate-dependent dioxygenase easH which introduces a hydroxyl group into N-(D-lysergyl-aminoacyl)-lactam at alpha-C of the aminoacyl residue followed by spontaneous condensation with the terminal lactam carbonyl group. The polypeptide is Tryptophan dimethylallyltransferase 1 (Claviceps purpurea (strain 20.1) (Ergot fungus)).